A 201-amino-acid polypeptide reads, in one-letter code: Recombination protein RecR (201 aa).

The C4-type zinc finger occupies 57–72 (CQVCYSLSDNDICDIC). The 98-residue stretch at 80–177 (NKICIVESYP…RITRITYGIS (98 aa)) folds into the Toprim domain.

It belongs to the RecR family.

Its function is as follows. May play a role in DNA repair. It seems to be involved in an RecBC-independent recombinational process of DNA repair. It may act with RecF and RecO. The polypeptide is Recombination protein RecR (Brachyspira hyodysenteriae (strain ATCC 49526 / WA1)).